Reading from the N-terminus, the 332-residue chain is MRIAVDAMGGDHAPKAIIDGVQKSLTAFSDIEITLVGDESKIKPYITNNERITILDAKEVIEPTDEPVRAVRRKKDSSMVKMAQEVSEGRADACISAGNTGALMTAGLFIVGRIDGIDRPALAPTLPTLDGSGFLLLDVGANVDAKPEHLVQYAMMGSIYAERVFPKSNPRVGLLNVGTEDKKGNDLTKKTFELLKASDLNFVGNVESRDLLEGVADVVVTDGFTGNIALKTIEGTALSVFKMLKETLTSSFTAKIAAGMMKPKLMQMKSKMDYSEYGGAALFGLKAPVIKAHGSSDENAIFHAIRQARDIVEKDVSAIIHQEVQKETTNES.

Belongs to the PlsX family. In terms of assembly, homodimer. Probably interacts with PlsY.

The protein resides in the cytoplasm. It carries out the reaction a fatty acyl-[ACP] + phosphate = an acyl phosphate + holo-[ACP]. The protein operates within lipid metabolism; phospholipid metabolism. Its function is as follows. Catalyzes the reversible formation of acyl-phosphate (acyl-PO(4)) from acyl-[acyl-carrier-protein] (acyl-ACP). This enzyme utilizes acyl-ACP as fatty acyl donor, but not acyl-CoA. In Bacillus pumilus (strain SAFR-032), this protein is Phosphate acyltransferase.